Here is a 224-residue protein sequence, read N- to C-terminus: Glycerol-3-phosphate acyltransferase (224 aa).

6 helical membrane passes run 4–24, 60–80, 88–108, 124–144, 149–169, and 182–202; these read FVIV…GSIN, LVIF…VYFV, SVVV…FPIW, IISV…LIII, IVSF…FIPW, and WPWW…IWSH.

It belongs to the PlsY family. As to quaternary structure, probably interacts with PlsX.

It localises to the cell membrane. It catalyses the reaction an acyl phosphate + sn-glycerol 3-phosphate = a 1-acyl-sn-glycero-3-phosphate + phosphate. It participates in lipid metabolism; phospholipid metabolism. Functionally, catalyzes the transfer of an acyl group from acyl-phosphate (acyl-PO(4)) to glycerol-3-phosphate (G3P) to form lysophosphatidic acid (LPA). This enzyme utilizes acyl-phosphate as fatty acyl donor, but not acyl-CoA or acyl-ACP. This Mycoplasmopsis pulmonis (strain UAB CTIP) (Mycoplasma pulmonis) protein is Glycerol-3-phosphate acyltransferase.